Here is a 309-residue protein sequence, read N- to C-terminus: Taste receptor type 2 member 31 (309 aa).

Residues 1–2 (MT) are Extracellular-facing. Residues 3–23 (TFLPIIFSSLVVVIFVIGNFA) traverse the membrane as a helical segment. The Cytoplasmic segment spans residues 24–55 (NGFIALVNSIEWFKXQKISFADQILTALAVSR). A helical membrane pass occupies residues 56–76 (VGLLWVLLLNWYSTVLNPAFY). The Extracellular segment spans residues 77–100 (SVEVRTTAYNVWAVTGHFSNWLAT). The chain crosses the membrane as a helical span at residues 101–121 (SLSIFYLLKIANFSNFIFLHL). At 122-126 (KRRVK) the chain is on the cytoplasmic side. Residues 127-147 (SVILVMLLGPLLFLACQLFMI) form a helical membrane-spanning segment. The Extracellular segment spans residues 148-181 (NMKEIVRTKEYEGNMTWKIKLRSAVYLSDATVTT). Asn161 carries an N-linked (GlcNAc...) asparagine glycan. The chain crosses the membrane as a helical span at residues 182–202 (LGNLVPFTLTLLCFLLLICSL). Residues 203–229 (CKHLKKMQLHGKGSQDPSTKVHIKVLQ) lie on the Cytoplasmic side of the membrane. Residues 230 to 250 (TVISFLLLCAIYFLSIMISVW) traverse the membrane as a helical segment. Over 251–259 (SFGSLKNKP) the chain is Extracellular. The helical transmembrane segment at 260–280 (VFMFCKAIRFSYPSIHPFILI) threads the bilayer. The Cytoplasmic portion of the chain corresponds to 281–309 (WGNKKLKQTFLSVLRQVRYWVKGEKPSSP).

The protein belongs to the G-protein coupled receptor T2R family.

The protein resides in the membrane. Functionally, receptor that may play a role in the perception of bitterness and is gustducin-linked. May play a role in sensing the chemical composition of the gastrointestinal content. The activity of this receptor may stimulate alpha gustducin, mediate PLC-beta-2 activation and lead to the gating of TRPM5. This Pan paniscus (Pygmy chimpanzee) protein is Taste receptor type 2 member 31 (TAS2R31).